A 396-amino-acid chain; its full sequence is Glutamyl-tRNA reductase (396 aa).

Substrate is bound by residues 45-48 (TCNR), Ser-101, 106-108 (EDQ), and Gln-112. Cys-46 acts as the Nucleophile in catalysis. Residue 177 to 182 (GFGDVG) participates in NADP(+) binding.

It belongs to the glutamyl-tRNA reductase family. In terms of assembly, homodimer.

It carries out the reaction (S)-4-amino-5-oxopentanoate + tRNA(Glu) + NADP(+) = L-glutamyl-tRNA(Glu) + NADPH + H(+). It participates in porphyrin-containing compound metabolism; protoporphyrin-IX biosynthesis; 5-aminolevulinate from L-glutamyl-tRNA(Glu): step 1/2. Catalyzes the NADPH-dependent reduction of glutamyl-tRNA(Glu) to glutamate 1-semialdehyde (GSA). The polypeptide is Glutamyl-tRNA reductase (Clostridium acetobutylicum (strain ATCC 824 / DSM 792 / JCM 1419 / IAM 19013 / LMG 5710 / NBRC 13948 / NRRL B-527 / VKM B-1787 / 2291 / W)).